Here is a 605-residue protein sequence, read N- to C-terminus: uncharacterized protein (605 aa).

A disordered region spans residues Phe-22–Glu-93. Positions Ser-46–Ser-57 are enriched in low complexity.

This is an uncharacterized protein from Treponema pallidum (strain Nichols).